Here is a 219-residue protein sequence, read N- to C-terminus: Ribose-5-phosphate isomerase A (219 aa).

Residues 28 to 31 (TGST), 81 to 84 (DGAD), and 94 to 97 (KGGG) each bind substrate. E103 acts as the Proton acceptor in catalysis. Position 121 (K121) interacts with substrate.

This sequence belongs to the ribose 5-phosphate isomerase family. As to quaternary structure, homodimer.

The catalysed reaction is aldehydo-D-ribose 5-phosphate = D-ribulose 5-phosphate. Its pathway is carbohydrate degradation; pentose phosphate pathway; D-ribose 5-phosphate from D-ribulose 5-phosphate (non-oxidative stage): step 1/1. Functionally, catalyzes the reversible conversion of ribose-5-phosphate to ribulose 5-phosphate. This is Ribose-5-phosphate isomerase A from Methylibium petroleiphilum (strain ATCC BAA-1232 / LMG 22953 / PM1).